A 118-amino-acid polypeptide reads, in one-letter code: DNA-binding protein SSO0352 (118 aa).

The protein belongs to the PDCD5 family.

In Saccharolobus solfataricus (strain ATCC 35092 / DSM 1617 / JCM 11322 / P2) (Sulfolobus solfataricus), this protein is DNA-binding protein SSO0352.